The following is a 265-amino-acid chain: Orotidine 5'-phosphate decarboxylase (265 aa).

Substrate-binding positions include Asp38, 60–62 (KTH), 91–100 (DRKFADIGNT), Tyr213, and Arg232. Lys93 (proton donor) is an active-site residue.

Belongs to the OMP decarboxylase family.

It catalyses the reaction orotidine 5'-phosphate + H(+) = UMP + CO2. It functions in the pathway pyrimidine metabolism; UMP biosynthesis via de novo pathway; UMP from orotate: step 2/2. The polypeptide is Orotidine 5'-phosphate decarboxylase (pyrG) (Rhizopus oryzae (Mucormycosis agent)).